An 822-amino-acid polypeptide reads, in one-letter code: Molybdenum cofactor sulfurase (822 aa).

Position 245 is an N6-(pyridoxal phosphate)lysine (K245). C412 is an active-site residue. The MOSC domain occupies 658-814; it reads LRLIRQSSND…LKTYSPIKAI (157 aa).

The protein belongs to the class-V pyridoxal-phosphate-dependent aminotransferase family. MOCOS subfamily. The cofactor is pyridoxal 5'-phosphate.

The enzyme catalyses Mo-molybdopterin + L-cysteine + AH2 = thio-Mo-molybdopterin + L-alanine + A + H2O. Its pathway is cofactor biosynthesis; molybdopterin biosynthesis. Its function is as follows. Sulfurates the molybdenum cofactor. Sulfation of molybdenum is essential for xanthine dehydrogenase (XDH) and aldehyde oxidase (ADO) enzymes in which molybdenum cofactor is liganded by 1 oxygen and 1 sulfur atom in active form. The chain is Molybdenum cofactor sulfurase from Bombyx mori (Silk moth).